Here is an 872-residue protein sequence, read N- to C-terminus: MKVTAVSSVLLTVAALTNANEIDKRSFFGDLFSGLTGSKAAAPAAAPAAQPAAQPTTQSPADQPTVQSPVSSDQPSTAQPVAQNNLLLDSSNSTLVVPSSSKSSTTTRSTAGLLDNLLGGSGATSSEASSSEAPSSEAPSSEAPSSEAPSSEAPSSEAPSSSSSEALSSSSTTKRPTAAAKGFFGDLFGTQSSASETDDEDCVEETESPTSAPASAPTTSKVATTTGGGLPNILSDLFPGKSSAPISSAESSPTVASSTTGFPNILSDLFPGKSSVPSSSAETSTTVASNTTTSGGGFPNILSDLFPGKSSVPSSSAEEDDEECEDPTESVTSNSSPTGGISIPTFPITSQSKTSVSSVVSKSTSEDDDDETECETDIPTIIPSGSVLPTTSVLPTIIPTGSGSITILPTKSATSDDDDDETDCETDIPTIVPTESATIIPTGSGSVTIIPTGSGSITVLPTKSATSDDDDDETDCETDIPTIIPTGTATIKPTGSGSITVLPTKSTTTDDDDDETDCETEIPTIHPTVSTTRTFTSDGVPTTQTLTTKLPPTTNQHTETEVVSITYTGGGQTFTTYLTQSGEICDETVTLTITTTCPSTTVAPGGQIYTTTVTVITTHTVYPDDWEDDGYEGEDNAGGSASGSSDDGEWEWYEEDDGECVPTGGSSSGSGTGSWWGSGAGSSGGTTSGSGSGSSSNSGASSGGTWGGSGNDYVCPGEEGYDDEEPDNGGSWWGGSGSGSSSGSSSGVSSGDSGSSSVTGGSSGSWWGGSGNDYVCPGEDGYDDEDDQTPEPECDDEDDSWDDDEECDTQAAKEVVNSVTVAAESVYPSTTAASLTTSWISTQTAQSVTQIENIGGKVSASGLFVVLGLLLI.

Positions 1–19 (MKVTAVSSVLLTVAALTNA) are cleaved as a signal peptide. The span at 43–65 (PAAAPAAQPAAQPTTQSPADQPT) shows a compositional bias: low complexity. Disordered regions lie at residues 43–383 (PAAA…TIIP), 492–517 (KPTG…DETD), and 623–809 (PDDW…ECDT). A compositionally biased stretch (polar residues) spans 66–83 (VQSPVSSDQPSTAQPVAQ). Low complexity-rich tracts occupy residues 84-110 (NNLL…TRST) and 125-171 (SSEA…SSSS). N-linked (GlcNAc...) asparagine glycosylation is present at N92. Positions 196–207 (ETDDEDCVEETE) are enriched in acidic residues. Composition is skewed to low complexity over residues 208-225 (SPTS…VATT), 242-260 (SSAP…SSTT), and 274-293 (SSVP…NTTT). N290 carries an N-linked (GlcNAc...) asparagine glycan. Residues 317–328 (AEEDDEECEDPT) are compositionally biased toward acidic residues. The segment covering 349–363 (TSQSKTSVSSVVSKS) has biased composition (low complexity). Over residues 366–376 (EDDDDETECET) the composition is skewed to acidic residues. Residues 495-506 (GSGSITVLPTKS) are compositionally biased toward polar residues. Acidic residues-rich tracts occupy residues 624–635 (DDWEDDGYEGED) and 646–659 (DDGE…DDGE). Gly residues-rich tracts occupy residues 666 to 692 (SSSG…GSGS), 701 to 710 (SSGGTWGGSG), and 731 to 740 (SWWGGSGSGS). Residues 741–760 (SSGSSSGVSSGDSGSSSVTG) show a composition bias toward low complexity. The segment covering 761–771 (GSSGSWWGGSG) has biased composition (gly residues). Residues 780–808 (DGYDDEDDQTPEPECDDEDDSWDDDEECD) show a composition bias toward acidic residues. Residue A845 is the site of GPI-anchor amidated alanine attachment. A propeptide spans 846–872 (QSVTQIENIGGKVSASGLFVVLGLLLI) (removed in mature form).

Belongs to the HYR1/IFF family. The GPI-anchor is attached to the protein in the endoplasmic reticulum and serves to target the protein to the cell surface. There, the glucosamine-inositol phospholipid moiety is cleaved off and the GPI-modified mannoprotein is covalently attached via its lipidless GPI glycan remnant to the 1,6-beta-glucan of the outer cell wall layer.

Its subcellular location is the secreted. The protein localises to the cell wall. The protein resides in the membrane. Probable GPI-anchored cell wall protein involved in cell wall organization, hyphal growth, as well as in host-fungal interaction and virulence. The chain is Probable GPI-anchored adhesin-like protein PGA25 (PGA25) from Candida albicans (strain SC5314 / ATCC MYA-2876) (Yeast).